The chain runs to 2061 residues: MDSEYVLCSWKGRLWPAKVLCTRGTSPKTKPEKAISLEVQILAVDEKIKVKSTDVKTPTKFEMEDIAASAAAQTKLGAPLREKMGYRGTLRVALEILKERTNLGGGRKPHELESTTPSQLSQKVPEKPASSVPREDDWRCKGDLRRSLGKRENPSSPTVPSESKRALRDDRSQEPTAIAPTPGALPGDRSGAPRAIAPTPGAMLSGRSRARRAIAPTPSALRGYRSWAHRAIAPTPGCLYSDRSRAHRAIAPARGTKHGGRSWACRSIAPKPGSLCGDRSQASRAIDPTLGARRGGRSRAHRAIAPTPGSLCGNRSRACGAIALTPGVLCGVRSRVPKDITPTPGALRGYKSWVCRAIAPTPGALRGDRSAARTAVVRTPGALGRDRSRARSAIASTPGTLQGNRSSVSKAIAPTPGALRGDRSAARTAFVPTPGALHRDRSRARSAIASTPGTLRGNTSSACKAIAPTPGALRGYKSWARRAIAPNPGAWRGYRSTTGTAIAPNLGALGGNRSAARTDIAPTPGALRGYRSWTRRAIAPTPGTLSSYRSRSRRTIASTPATLRGEKSRAHTSLAPTPGALRGDGSRARRAIVPTTCPLCEIWSRVGIGIAPIADALRRDRSPVRRAIAPTPGTLSGYRSRARTAIAPTPGTLRGYRPRSRRAIASTPATLRGEKSRAHTSLAPAPGALRGDGSRARRAIVPTTCPLCEIWSRVGIGIAPIADALRRDRPPVRRAIAPTPGALRCDRSRELTAIDPTPGALCSDRSGASRAIAPTPGTLCSERSRVRRAIAPTPCALCGKGSQVGMGVAPTPGALRRDRSQAGRAIAPTPSALFRVGSRVGTGIALPAGALHRDRSPVRRAVAPTPGTLHCDGSRKCTATGSTPGALPGDRSGVSKATAPAPGALCSERSRARRSIAPTPCLLCGDRSWVGMGIAPTPGALLGGKSRKCRAIAITPGALRGGRSQKRRVVAPTPEALHGDGSWTYMAIAPTPGALHGDSSPAHTSIIPSPGALHGDGPPAHMAFPSTPGTLHGDASHAHMAIAPTPGTMRGDSSTARTATAPSPGALRGDRSWKRKAIASTPGALHGNRSDRSRKCKAIASTPGTLHVERSPALRAIVPTPGTLGRDSSPGRTSIIPSPGALHGDRSPAHLDIASTPGALHGDSSQAHTAIAPTPGTMRGDSSTARMAIAPSAGALRGDRSWKRKAIASTPGALRGNRSDRSRKRKAIASTPGALLGNRSDRSRKHKAIAPTPGAPRIDRSPACRAIAPTPGALGDDSSTAIAPTPGTPRGDSSPANTAIASTPGALHGDTSQTHKAIAPTPGDLGGGSSSAHKAITPSPGALHGDRSPAHTAIASTPGALHGDSSQVHTTIAPTPGALRDDKSWKRKAIAPTPGTLHCDSSRTCTAFAPTPGALHADRSPAHQDITLTSGALHCDSSRESRAVAPILGALHRVGSQAHKAIASTPGPLRGDSSPFHTAIAPMPGALHGTRSWKREAISQTPFVTLCGDSSGERMAIAPTPGALHSDRSQTHTAIDPTPSVLRSDSSPACMAIDPTPGALGRDRSQALMAIAPTPVGMQAHVLQSPRACQDSLTLSRHVCEKKGKKRANASTLMSLPPTVTEEGASLPPGLTSPAPPALKEETQDSRPKKALAASPESSPFSGNIQDPGEGAWKPGWAGMAASSGSRQHRLPSSLRLANRKRKRPGPDFQRRPQGPQTPGDAKLANPVTTIQRAGGKQDGQPPSLAFPQEPHPIERGTMVWFKFQDHPFWPAVVKSVSNTDKTARVLLLEANLHHGKRGIQVPLRRLKHLDCKEKEKLLKRAQKAYKQSVNWCFSLISHYREGLVRGSFRGSFLDYYAADISYPIRRAIQEGDLQIDFPKVNYGDLEDWEEETSLGGKRPCKKILPDRMRASWDRDNQKLVDFIVRRKGADPHLLDILQGRKQSRWLTAFLKPHRDLHCIETYLEDDDQLEVVAKHLQEIYKQIDKARLTLIRDDKVNFVLEVLLPEAMICTIAALDGLDYKAAEEKYLRGPPVHYREKELFDRNILKKARREPATTHTAN.

Disordered stretches follow at residues 101–211, 382–408, 541–586, 668–694, 864–910, 1046–1072, 1159–1182, 1205–1383, 1521–1548, and 1602–1726; these read TNLG…SRAR, ALGR…RSSV, TPGT…GDGS, PATL…GDGS, PTPG…SERS, PGTM…GDRS, ALHG…RGDS, KAIA…RDDK, PGAL…DSSP, and KKGK…KLAN. Composition is skewed to basic and acidic residues over residues 133 to 153 and 162 to 173; these read PRED…KREN and ESKRALRDDRSQ. Over residues 397-408 the composition is skewed to polar residues; it reads TPGTLQGNRSSV. The span at 1051–1061 shows a compositional bias: polar residues; it reads GDSSTARTATA. A compositionally biased stretch (polar residues) spans 1364-1373; that stretch reads DSSQVHTTIA. The span at 1639 to 1648 shows a compositional bias: basic and acidic residues; sequence LKEETQDSRP. Over residues 1656–1665 the composition is skewed to polar residues; sequence PESSPFSGNI. Residues 1756–1817 enclose the PWWP domain; that stretch reads RGTMVWFKFQ…KHLDCKEKEK (62 aa).

Belongs to the PWWP3A family.

The chain is Putative PWWP domain-containing DNA repair factor 4 from Homo sapiens (Human).